The chain runs to 108 residues: Pyrimidine/purine nucleoside phosphorylase (108 aa).

This sequence belongs to the nucleoside phosphorylase PpnP family.

It catalyses the reaction a purine D-ribonucleoside + phosphate = a purine nucleobase + alpha-D-ribose 1-phosphate. The catalysed reaction is adenosine + phosphate = alpha-D-ribose 1-phosphate + adenine. The enzyme catalyses cytidine + phosphate = cytosine + alpha-D-ribose 1-phosphate. It carries out the reaction guanosine + phosphate = alpha-D-ribose 1-phosphate + guanine. It catalyses the reaction inosine + phosphate = alpha-D-ribose 1-phosphate + hypoxanthine. The catalysed reaction is thymidine + phosphate = 2-deoxy-alpha-D-ribose 1-phosphate + thymine. The enzyme catalyses uridine + phosphate = alpha-D-ribose 1-phosphate + uracil. It carries out the reaction xanthosine + phosphate = alpha-D-ribose 1-phosphate + xanthine. Its function is as follows. Catalyzes the phosphorolysis of diverse nucleosides, yielding D-ribose 1-phosphate and the respective free bases. Can use uridine, adenosine, guanosine, cytidine, thymidine, inosine and xanthosine as substrates. Also catalyzes the reverse reactions. This Acinetobacter baumannii (strain AB307-0294) protein is Pyrimidine/purine nucleoside phosphorylase.